Here is a 40-residue protein sequence, read N- to C-terminus: Large ribosomal subunit protein bL36B (40 aa).

It belongs to the bacterial ribosomal protein bL36 family.

The chain is Large ribosomal subunit protein bL36B from Kocuria rhizophila (strain ATCC 9341 / DSM 348 / NBRC 103217 / DC2201).